We begin with the raw amino-acid sequence, 101 residues long: Small ribosomal subunit protein uS14 (101 aa).

The segment at Arg-53–Gly-72 is disordered. The span at Arg-61–Pro-70 shows a compositional bias: basic and acidic residues.

The protein belongs to the universal ribosomal protein uS14 family. In terms of assembly, part of the 30S ribosomal subunit. Contacts proteins S3 and S10.

Binds 16S rRNA, required for the assembly of 30S particles and may also be responsible for determining the conformation of the 16S rRNA at the A site. This is Small ribosomal subunit protein uS14 from Corynebacterium glutamicum (strain ATCC 13032 / DSM 20300 / JCM 1318 / BCRC 11384 / CCUG 27702 / LMG 3730 / NBRC 12168 / NCIMB 10025 / NRRL B-2784 / 534).